A 359-amino-acid chain; its full sequence is Type-1 angiotensin II receptor A (359 aa).

Residues 1–25 (MALNSSAEDGIKRIQDDCPKAGRHS) are Extracellular-facing. A glycan (N-linked (GlcNAc...) asparagine) is linked at N4. Residues Q15 and D17 each contribute to the angiotensin II site. 2 disulfides stabilise this stretch: C18/C274 and C101/C180. Residues 26–55 (YIFVMIPTLYSIIFVVGIFGNSLVVIVIYF) traverse the membrane as a helical segment. Topologically, residues 56–61 (YMKLKT) are cytoplasmic. Residues 62-89 (VASVFLLNLALADLCFLLTLPLWAVYTA) traverse the membrane as a helical segment. Residues 90 to 98 (MEYRWPFGN) lie on the Extracellular side of the membrane. Residues 99–125 (HLCKIASASVSFNLYASVFLLTCLSID) form a helical membrane-spanning segment. Residues 126-141 (RYLAIVHPMKSRLRRT) lie on the Cytoplasmic side of the membrane. Residues 142 to 165 (MLVAKVTCIIIWLMAGLASLPAVI) traverse the membrane as a helical segment. The Extracellular portion of the chain corresponds to 166–190 (HRNVYFIENTNITVCAFHYESRNST). R167 contacts angiotensin II. The N-linked (GlcNAc...) asparagine glycan is linked to N176. Angiotensin II is bound by residues F182, H183, and Y184. A glycan (N-linked (GlcNAc...) asparagine) is linked at N188. A helical membrane pass occupies residues 191-216 (LPIGLGLTKNILGFLFPFLIILTSYT). An angiotensin II-binding site is contributed by K199. The Cytoplasmic portion of the chain corresponds to 217-239 (LIWKALKKAYEIQKNKPRNDDIF). The chain crosses the membrane as a helical span at residues 240–268 (RIIMAIVLFFFFSWVPHQIFTFLDVLIQL). Over 269–278 (GVIHDCKISD) the chain is Extracellular. The helical transmembrane segment at 279–304 (IVDTAMPITICIAYFNNCLNPLFYGF) threads the bilayer. The Cytoplasmic portion of the chain corresponds to 305-359 (LGKKFKKYFLQLLKYIPPKAKSHSSLSTKMSTLSYRPSDNMSSSAKKPASCFEVE). Positions 337–349 (LSYRPSDNMSSSA) are enriched in polar residues. The disordered stretch occupies residues 337 to 359 (LSYRPSDNMSSSAKKPASCFEVE). C355 carries the S-palmitoyl cysteine lipid modification.

This sequence belongs to the G-protein coupled receptor 1 family. As to quaternary structure, interacts with MAS1. Interacts with ARRB1. Interacts with FLNA (via filamin repeat 21); increases PKA-mediated phosphorylation of FLNA. C-terminal Ser or Thr residues may be phosphorylated. As to expression, is expressed in the liver, kidney, aorta, lung, uterus, ovary, spleen, heart, adrenal gland, and vascular smooth muscle cell.

It localises to the cell membrane. In terms of biological role, receptor for angiotensin II, a vasoconstricting peptide, which acts as a key regulator of blood pressure and sodium retention by the kidney. The activated receptor in turn couples to G-alpha proteins G(q) (GNAQ, GNA11, GNA14 or GNA15) and thus activates phospholipase C and increases the cytosolic Ca(2+) concentrations, which in turn triggers cellular responses such as stimulation of protein kinase C. The polypeptide is Type-1 angiotensin II receptor A (Agtr1) (Rattus norvegicus (Rat)).